Reading from the N-terminus, the 489-residue chain is Rhamnulokinase (489 aa).

ATP is bound at residue 13–17; the sequence is ASSGR. Cys68 and Cys222 are disulfide-bonded. Substrate contacts are provided by residues Gly83 and 236–238; that span reads HDT. The active-site Proton acceptor is Asp237. ATP is bound at residue Thr259. Asn296 is a binding site for substrate. ATP is bound at residue Gln304. Cys353 and Cys370 are joined by a disulfide. Position 402 (Gly402) interacts with ATP. A disulfide bridge links Cys413 with Cys417.

Belongs to the rhamnulokinase family. As to quaternary structure, monomer. Mg(2+) is required as a cofactor.

It catalyses the reaction L-rhamnulose + ATP = L-rhamnulose 1-phosphate + ADP + H(+). It functions in the pathway carbohydrate degradation; L-rhamnose degradation; glycerone phosphate from L-rhamnose: step 2/3. Involved in the catabolism of L-rhamnose (6-deoxy-L-mannose). Catalyzes the transfer of the gamma-phosphate group from ATP to the 1-hydroxyl group of L-rhamnulose to yield L-rhamnulose 1-phosphate. In Escherichia coli O1:K1 / APEC, this protein is Rhamnulokinase.